The sequence spans 886 residues: DNA double-strand break repair Rad50 ATPase (886 aa).

Residues Arg-13, 33 to 39 (NGAGKSS), and Gln-128 each bind ATP. 2 coiled-coil regions span residues 183–360 (EQIK…LLET) and 400–433 (KEIT…LKSA). One can recognise a Zinc-hook domain in the interval 392 to 489 (LSKAKEEEKE…RLEKVEKALE (98 aa)). Positions 437 and 440 each coordinate Zn(2+). Coiled coils occupy residues 489–518 (EKQE…DAEK) and 545–713 (SSAS…KKVE). ATP is bound at residue 792–797 (FLSGGE).

This sequence belongs to the SMC family. RAD50 subfamily. As to quaternary structure, homodimer. Forms a heterotetramer composed of two Mre11 subunits and two Rad50 subunits. Zn(2+) serves as cofactor.

Part of the Rad50/Mre11 complex, which is involved in the early steps of DNA double-strand break (DSB) repair. The complex may facilitate opening of the processed DNA ends to aid in the recruitment of HerA and NurA. Rad50 controls the balance between DNA end bridging and DNA resection via ATP-dependent structural rearrangements of the Rad50/Mre11 complex. This is DNA double-strand break repair Rad50 ATPase from Archaeoglobus fulgidus (strain ATCC 49558 / DSM 4304 / JCM 9628 / NBRC 100126 / VC-16).